The chain runs to 498 residues: ATP synthase subunit beta, chloroplastic (498 aa).

172 to 179 (GGAGVGKT) contributes to the ATP binding site.

This sequence belongs to the ATPase alpha/beta chains family. In terms of assembly, F-type ATPases have 2 components, CF(1) - the catalytic core - and CF(0) - the membrane proton channel. CF(1) has five subunits: alpha(3), beta(3), gamma(1), delta(1), epsilon(1). CF(0) has four main subunits: a(1), b(1), b'(1) and c(9-12).

It is found in the plastid. Its subcellular location is the chloroplast thylakoid membrane. It carries out the reaction ATP + H2O + 4 H(+)(in) = ADP + phosphate + 5 H(+)(out). In terms of biological role, produces ATP from ADP in the presence of a proton gradient across the membrane. The catalytic sites are hosted primarily by the beta subunits. This is ATP synthase subunit beta, chloroplastic from Buxus microphylla (Littleleaf boxwood).